The sequence spans 302 residues: Tegument protein VP22 (302 aa).

The segment covering M1 to C10 has biased composition (basic and acidic residues). Disordered regions lie at residues M1–S42 and S125–S167. Positions R154–A244 are interaction with gE. Residues S157–S167 are compositionally biased toward polar residues. The Nuclear export signal motif lies at L212–T224. Residues G243–K302 are disordered.

This sequence belongs to the alphaherpesvirinae VP22 tegument protein family. As to quaternary structure, interacts with gE (via C-terminus); this interaction is necessary for the recruitment of VP22/ORF9 to the Golgi and its packaging into virions. Interacts with gM (via C-terminus). Interacts with VP16/ORF10; this interaction allows the formation of a tripartite complex composed of VP16/ORF10, VP22/ORF9 and VHS/ORF17. Interacts with the capsid-binding protein ORF44. Interacts with host CGAS. In terms of processing, highly phosphorylated in the host cell. Packaging is selective for underphosphorylated forms.

The protein resides in the virion tegument. It localises to the host cytoplasm. The protein localises to the host nucleus. It is found in the host Golgi apparatus. Its function is as follows. Tegument protein that plays different roles during the time course of infection. Participates in both the accumulation of viral mRNAs and viral protein translation at late time of infection. Modulates the RNase activity of the virion host shutoff protein ORF17 probably to ensure necessary levels of key cellular mRNAs and proteins. Plays a role in microtubule reorganization that occurs after viral infection by stabilizing microtubule network. Plays a role in the inhibition of host innate immune system by targeting the CGAS enzymatic activity which is the principal cytosolic DNA sensor that detects invading viral DNA. Acts by mediating disruption of liquid-like droplets in which CGAS is activated, thereby preventing CGAS activity. The sequence is that of Tegument protein VP22 from Varicella-zoster virus (strain Oka vaccine) (HHV-3).